Here is a 106-residue protein sequence, read N- to C-terminus: MKKKKAIMLGAAGGKAILKRKNRKKCIQHITTFFQMLRDWRNGDYPRSQVKTLLLLTAAILYIVMPLDIIPDVILGLGFIDDAAVLGLIWTLIKKELSQYEKWRLQ.

2 helical membrane-spanning segments follow: residues 53-70 (LLLL…LDII) and 74-93 (ILGL…WTLI).

It is found in the cell membrane. This is an uncharacterized protein from Bacillus subtilis (strain 168).